Here is a 59-residue protein sequence, read N- to C-terminus: UPF0434 protein lpg1920 (59 aa).

This sequence belongs to the UPF0434 family.

The sequence is that of UPF0434 protein lpg1920 from Legionella pneumophila subsp. pneumophila (strain Philadelphia 1 / ATCC 33152 / DSM 7513).